A 269-amino-acid chain; its full sequence is Shikimate dehydrogenase (NADP(+)) (269 aa).

Shikimate contacts are provided by residues 13-15 (SLS) and threonine 60. Lysine 64 functions as the Proton acceptor in the catalytic mechanism. Glutamate 76 is a binding site for NADP(+). Residues asparagine 85 and aspartate 100 each contribute to the shikimate site. NADP(+) contacts are provided by residues 124–128 (GAGGA), 148–153 (NRTMSR), and isoleucine 209. Tyrosine 211 serves as a coordination point for shikimate. NADP(+) is bound at residue glycine 232. Position 239 (glutamine 239) interacts with shikimate.

The protein belongs to the shikimate dehydrogenase family. Monomer or homodimer.

The catalysed reaction is shikimate + NADP(+) = 3-dehydroshikimate + NADPH + H(+). Its pathway is metabolic intermediate biosynthesis; chorismate biosynthesis; chorismate from D-erythrose 4-phosphate and phosphoenolpyruvate: step 4/7. Involved in the biosynthesis of the chorismate, which leads to the biosynthesis of aromatic amino acids. Catalyzes the reversible NADPH linked reduction of 3-dehydroshikimate (DHSA) to yield shikimate (SA). It can also use NAD to oxidize shikimate. The polypeptide is Shikimate dehydrogenase (NADP(+)) (Staphylococcus epidermidis (strain ATCC 35984 / DSM 28319 / BCRC 17069 / CCUG 31568 / BM 3577 / RP62A)).